The chain runs to 137 residues: uncharacterized protein (137 aa).

A helical transmembrane segment spans residues 4–21; that stretch reads ISWQIVLAVIGVVAGFII.

It localises to the membrane. This is an uncharacterized protein from Archaeoglobus fulgidus (strain ATCC 49558 / DSM 4304 / JCM 9628 / NBRC 100126 / VC-16).